Here is a 970-residue protein sequence, read N- to C-terminus: Protein bicaudal C homolog 1-B (970 aa).

The segment at 1 to 50 (MAAQCGGYMNQSDPGSNSERSADSPLPGSEDDSPGSAAPHDPEWREERFR) is disordered. Positions 9–19 (MNQSDPGSNSE) are enriched in polar residues. A compositionally biased stretch (basic and acidic residues) spans 40-50 (HDPEWREERFR). 2 KH domains span residues 130 to 197 (RVTL…RVRI) and 282 to 346 (PVST…RQYL). Polar residues predominate over residues 596–605 (EASRQSNNHS). Disordered regions lie at residues 596–638 (EASR…SANT), 677–696 (SDSE…APGS), and 773–841 (RRAN…NKSA). Residues 606-616 (SAEEVNSKTDS) are compositionally biased toward basic and acidic residues. 2 stretches are compositionally biased toward polar residues: residues 783–810 (TMST…GSDS) and 819–831 (IDSS…SSIG). Residues 869–932 (FKGSDLPELF…LLAISELNKN (64 aa)) enclose the SAM domain.

This sequence belongs to the BicC family.

Putative RNA-binding protein. May be involved in regulating gene expression during embryonic development. Seems to be involved in endoderm formation. Ectopic expression results in endoderm formation in the absence of mesoderm induction. The protein is Protein bicaudal C homolog 1-B (bicc1-b) of Xenopus laevis (African clawed frog).